A 547-amino-acid polypeptide reads, in one-letter code: Probable pectinesterase/pectinesterase inhibitor 12 (547 aa).

The first 23 residues, 1 to 23 (MALSSFNLSSLLFLLFFTPSVFS), serve as a signal peptide directing secretion. Residues 31–185 (NPHETSATSF…YKHISNSLSA (155 aa)) form a pectinesterase inhibitor 12 region. 4 N-linked (GlcNAc...) asparagine glycosylation sites follow: asparagine 131, asparagine 247, asparagine 260, and asparagine 303. Positions 237–533 (SLVVAADGTG…FTATEFITGD (297 aa)) are pectinesterase 12. Threonine 312 and glutamine 342 together coordinate substrate. Aspartate 365 (proton donor; for pectinesterase activity) is an active-site residue. Cysteines 379 and 399 form a disulfide. Catalysis depends on aspartate 386, which acts as the Nucleophile; for pectinesterase activity. Asparagine 432 and asparagine 443 each carry an N-linked (GlcNAc...) asparagine glycan. Substrate-binding residues include arginine 454 and tryptophan 456. N-linked (GlcNAc...) asparagine glycosylation occurs at asparagine 523.

This sequence in the N-terminal section; belongs to the PMEI family. The protein in the C-terminal section; belongs to the pectinesterase family. In terms of tissue distribution, expressed in siliques.

Its subcellular location is the secreted. The protein localises to the cell wall. The enzyme catalyses [(1-&gt;4)-alpha-D-galacturonosyl methyl ester](n) + n H2O = [(1-&gt;4)-alpha-D-galacturonosyl](n) + n methanol + n H(+). The protein operates within glycan metabolism; pectin degradation; 2-dehydro-3-deoxy-D-gluconate from pectin: step 1/5. Functionally, acts in the modification of cell walls via demethylesterification of cell wall pectin. This Arabidopsis thaliana (Mouse-ear cress) protein is Probable pectinesterase/pectinesterase inhibitor 12 (PME12).